The following is a 91-amino-acid chain: uncharacterized protein (91 aa).

The next 3 helical transmembrane spans lie at 9-29 (LIHA…YTAG), 30-50 (LGIF…VIFG), and 67-87 (WLGC…VLKF).

It is found in the cell membrane. This is an uncharacterized protein from Methanocaldococcus jannaschii (strain ATCC 43067 / DSM 2661 / JAL-1 / JCM 10045 / NBRC 100440) (Methanococcus jannaschii).